The primary structure comprises 285 residues: SLAM family member 8 (285 aa).

The N-terminal stretch at 1-22 (MVMRPLWSLLLWEALLPITVTG) is a signal peptide. The Extracellular portion of the chain corresponds to 23–233 (AQVLSKVGGS…AAPGKASYKD (211 aa)). Asparagine 85 carries N-linked (GlcNAc...) asparagine glycosylation. An Ig-like C2-type domain is found at 128–215 (PVVQVFIAVE…PVSWDLATVT (88 aa)). Cysteine 152 and cysteine 201 are disulfide-bonded. A helical transmembrane segment spans residues 234 to 254 (VLLVVVPVSLLLMLVTLFSAW). The Cytoplasmic segment spans residues 255–285 (HWCPCSGKKKKDVHADRVGPETENPLVQDLP). Residues 262–285 (KKKKDVHADRVGPETENPLVQDLP) are disordered.

In terms of tissue distribution, expressed in lymph node, spleen, thymus and bone marrow.

It is found in the membrane. May play a role in B-lineage commitment and/or modulation of signaling through the B-cell receptor. The sequence is that of SLAM family member 8 (SLAMF8) from Homo sapiens (Human).